A 154-amino-acid chain; its full sequence is Aminoalkylphosphonate N-acetyltransferase (154 aa).

Positions 14–154 (CELRHATTED…QSHFRFTKAL (141 aa)) constitute an N-acetyltransferase domain.

Homodimer. A divalent metal cation is required as a cofactor.

The catalysed reaction is aminomethylphosphonate + acetyl-CoA = 2-N-acetamidomethylphosphonate + CoA. It carries out the reaction (S)-1-aminoethylphosphonate + acetyl-CoA = [(1S)-1-acetamidoethyl]phosphonate + CoA. Functionally, aminoalkylphosphonate N-acetyltransferase which is able to acetylate a range of aminoalkylphosphonic acids, including (S)-1-aminoethylphosphonate ((S)-1AEP) and 2-aminoethylphosphonate, using acetyl-CoA as acetyl donor. Its physiological role in S.typhimurium is unclear. However, by acetylating (S)-1AEP, PhnO would protect against the deleterious effects of (S)-1AEP, a structural analog of D-alanine that has antibacterial properties. This Salmonella typhimurium (strain LT2 / SGSC1412 / ATCC 700720) protein is Aminoalkylphosphonate N-acetyltransferase.